The primary structure comprises 416 residues: Serine hydroxymethyltransferase (416 aa).

(6S)-5,6,7,8-tetrahydrofolate-binding positions include Leu121 and 125–127 (GHL). Lys229 is subject to N6-(pyridoxal phosphate)lysine.

This sequence belongs to the SHMT family. As to quaternary structure, homodimer. The cofactor is pyridoxal 5'-phosphate.

The protein resides in the cytoplasm. It carries out the reaction (6R)-5,10-methylene-5,6,7,8-tetrahydrofolate + glycine + H2O = (6S)-5,6,7,8-tetrahydrofolate + L-serine. The protein operates within one-carbon metabolism; tetrahydrofolate interconversion. It functions in the pathway amino-acid biosynthesis; glycine biosynthesis; glycine from L-serine: step 1/1. Functionally, catalyzes the reversible interconversion of serine and glycine with tetrahydrofolate (THF) serving as the one-carbon carrier. This reaction serves as the major source of one-carbon groups required for the biosynthesis of purines, thymidylate, methionine, and other important biomolecules. Also exhibits THF-independent aldolase activity toward beta-hydroxyamino acids, producing glycine and aldehydes, via a retro-aldol mechanism. This is Serine hydroxymethyltransferase from Bordetella avium (strain 197N).